The chain runs to 198 residues: Protein FAM219B (198 aa).

2 disordered regions span residues 1 to 58 (MATA…KRGP) and 83 to 146 (RRKG…EQVN). Ser-14, Ser-91, Ser-125, and Ser-127 each carry phosphoserine. A compositionally biased stretch (polar residues) spans 134–146 (RYSSGYSSAEQVN).

Belongs to the FAM219 family.

This chain is Protein FAM219B (FAM219B), found in Homo sapiens (Human).